We begin with the raw amino-acid sequence, 337 residues long: MRVLGIETSCDETGVAIYDDAAGLLANQLYSQVKLHADYGGVVPELASRDHVRKTVPLIQAALQEAGLQAQDIDAVAYTAGPGLVGALLVGATIGRSLAFAWDVPAIAVHHMEGHLLAPMLEDNPPEFPFVALLVSGGHTQLISVTGIGSYTLMGESIDDAAGEAFDKTAKLLGLDYPGGPMLSKMAQQGVEKRFVFPRPMTDRPGLDFSFSGLKTFAANTIRDNDDSSQTHADIARAFEDAVVDTLAIKCRRALDQSGFKRLVIAGGVSANRTLRAKLAEMMQKRGGEVFYARPEFCTDNGAMIAYAGMVRLKGGTHAELSVTVRPRWPLAELPAI.

Positions 111 and 115 each coordinate Fe cation. Substrate is bound by residues 134 to 138, Asp167, Gly180, and Asn272; that span reads LVSGG. Asp300 contacts Fe cation.

It belongs to the KAE1 / TsaD family. Fe(2+) serves as cofactor.

It localises to the cytoplasm. The enzyme catalyses L-threonylcarbamoyladenylate + adenosine(37) in tRNA = N(6)-L-threonylcarbamoyladenosine(37) in tRNA + AMP + H(+). Functionally, required for the formation of a threonylcarbamoyl group on adenosine at position 37 (t(6)A37) in tRNAs that read codons beginning with adenine. Is involved in the transfer of the threonylcarbamoyl moiety of threonylcarbamoyl-AMP (TC-AMP) to the N6 group of A37, together with TsaE and TsaB. TsaD likely plays a direct catalytic role in this reaction. The protein is tRNA N6-adenosine threonylcarbamoyltransferase of Erwinia tasmaniensis (strain DSM 17950 / CFBP 7177 / CIP 109463 / NCPPB 4357 / Et1/99).